A 509-amino-acid polypeptide reads, in one-letter code: Maturase K (509 aa).

It belongs to the intron maturase 2 family. MatK subfamily.

The protein localises to the plastid. Its subcellular location is the chloroplast. In terms of biological role, usually encoded in the trnK tRNA gene intron. Probably assists in splicing its own and other chloroplast group II introns. The protein is Maturase K of Arpophyllum giganteum (Hyacinth orchid).